The primary structure comprises 266 residues: Dihydropteroate synthase (266 aa).

In terms of domain architecture, Pterin-binding spans 12 to 260; that stretch reads AAIMGILNVT…DVKANQDIVA (249 aa). Residue N19 coordinates Mg(2+). Residues T59, D93, N112, D176, K212, and 248–250 contribute to the (7,8-dihydropterin-6-yl)methyl diphosphate site; that span reads RVH.

It belongs to the DHPS family. Homodimer or homotrimer. The cofactor is Mg(2+).

The catalysed reaction is (7,8-dihydropterin-6-yl)methyl diphosphate + 4-aminobenzoate = 7,8-dihydropteroate + diphosphate. The protein operates within cofactor biosynthesis; tetrahydrofolate biosynthesis; 7,8-dihydrofolate from 2-amino-4-hydroxy-6-hydroxymethyl-7,8-dihydropteridine diphosphate and 4-aminobenzoate: step 1/2. Catalyzes the condensation of para-aminobenzoate (pABA) with 6-hydroxymethyl-7,8-dihydropterin diphosphate (DHPt-PP) to form 7,8-dihydropteroate (H2Pte), the immediate precursor of folate derivatives. The polypeptide is Dihydropteroate synthase (folP) (Streptococcus pyogenes serotype M6 (strain ATCC BAA-946 / MGAS10394)).